The following is a 506-amino-acid chain: UDP-glycosyltransferase eriJ (506 aa).

It belongs to the UDP-glycosyltransferase family.

It carries out the reaction 11-O-acetylcyathatriol + UDP-alpha-D-xylose = erinacine Q + UDP + H(+). It catalyses the reaction 11-O-acetylcyathatriol + UDP-alpha-D-glucose = erinacine Q2 + UDP + H(+). The protein operates within secondary metabolite biosynthesis. Functionally, UDP-glycosyltransferase; part of the gene cluster that mediates the biosynthesis of erinacines, cyathane-xylosides that show unique biological activities, including leishmanicidal activity, stimulating activity for nerve growth-factor synthesis, and agonistic activity toward the kappa opioid receptor. Within the pathway, eriJ tranfers xylose from UDP-xylose onto C-14 of 11-O-acetyl-cyathatriol to form eracine Q, and, at a lower rate, glucose from UDP-D-glucose to produce eracine Q2. The first step of the erinacines biosynthesis pathway is catalyzed by the geranylgeranyl diphosphate (GGPP) synthase eriE via conversion of farnesyl pyrophosphate and isopentyl pyrophosphate into geranylgeranyl pyrophosphate (GGPP). GGPP is then substrate of the diterpene cyclase eriG for the production of cyatha-3,12-diene. The cytochrome P450 monooxygenase eriI then hydroxylates cyatha-3,12-diene at C-14 of the seven-membered ring to produce erinacol, which is further hydroxylated at C-15 by the cytochrome P450 monooxygenase eriC to yield cyathadiol. The cytochrome P450 monooxygenase eriA then catalyzes C-11 hydroxylation in the presence of the short chain dehydrogenase/reductase (SDR) eriH, which leads to the production of cyathatriol. The acetyltransferase eriL converts cyathatriol into 11-O-acetyl-cyathatriol. The SDR eriH catalyzes further oxidation of 11-O-acetyl-cyathatriol into 1-O-acetylcyathin A3. Finally, the glycosyl transferase eriJ tranfers xylose from UDP-xylose onto C-14 of 11-O-acetyl-cyathatriol to form eracine Q. EriJ is also able to convert 11-O-acetyl-cyathatriol to eracine Q2 by using UDP-D-glucose as cosubstrate, but at a lower rate. This Hericium erinaceus (Lion's mane mushroom) protein is UDP-glycosyltransferase eriJ.